The primary structure comprises 761 residues: BMP/retinoic acid-inducible neural-specific protein 1 (761 aa).

A signal peptide spans 1–19; that stretch reads MNWRFVELLYFLFIWGRIS. In terms of domain architecture, MACPF spans 68-251; sequence RYKIYREFAR…FVQSALSYIM (184 aa). N156, N433, N443, N553, N599, N631, and N677 each carry an N-linked (GlcNAc...) asparagine glycan.

The protein belongs to the BRINP family. Highly expressed in brain. Weakly expressed in heart, lung, skeletal muscle, kidney, thymus, prostate, testis and small intestine.

Its subcellular location is the cytoplasm. Functionally, plays a role in neurogenesis and brain development. May suppress cell cycle progression in postmitotic neurons by inhibiting G1/S transition. The protein is BMP/retinoic acid-inducible neural-specific protein 1 (BRINP1) of Homo sapiens (Human).